The chain runs to 125 residues: Holo-[acyl-carrier-protein] synthase (125 aa).

Mg(2+)-binding residues include aspartate 8 and glutamate 57.

This sequence belongs to the P-Pant transferase superfamily. AcpS family. Mg(2+) is required as a cofactor.

It localises to the cytoplasm. It catalyses the reaction apo-[ACP] + CoA = holo-[ACP] + adenosine 3',5'-bisphosphate + H(+). Its function is as follows. Transfers the 4'-phosphopantetheine moiety from coenzyme A to a Ser of acyl-carrier-protein. The sequence is that of Holo-[acyl-carrier-protein] synthase from Neisseria gonorrhoeae (strain ATCC 700825 / FA 1090).